The chain runs to 625 residues: Probable potassium transport system protein Kup 2 (625 aa).

A run of 12 helical transmembrane segments spans residues L15 to F35, I52 to V72, G98 to L118, L134 to F154, I164 to F184, L212 to A232, W246 to L266, F284 to I304, V336 to F356, A365 to A385, F394 to I414, and L417 to T437.

The protein belongs to the HAK/KUP transporter (TC 2.A.72) family.

The protein localises to the cell inner membrane. It catalyses the reaction K(+)(in) + H(+)(in) = K(+)(out) + H(+)(out). Functionally, transport of potassium into the cell. Likely operates as a K(+):H(+) symporter. This Legionella pneumophila (strain Corby) protein is Probable potassium transport system protein Kup 2.